The following is a 204-amino-acid chain: Methylthioribulose-1-phosphate dehydratase (204 aa).

Positions 94 and 96 each coordinate Zn(2+).

This sequence belongs to the aldolase class II family. MtnB subfamily. Zn(2+) is required as a cofactor.

It catalyses the reaction 5-(methylsulfanyl)-D-ribulose 1-phosphate = 5-methylsulfanyl-2,3-dioxopentyl phosphate + H2O. It functions in the pathway amino-acid biosynthesis; L-methionine biosynthesis via salvage pathway; L-methionine from S-methyl-5-thio-alpha-D-ribose 1-phosphate: step 2/6. Its function is as follows. Catalyzes the dehydration of methylthioribulose-1-phosphate (MTRu-1-P) into 2,3-diketo-5-methylthiopentyl-1-phosphate (DK-MTP-1-P). In Pseudomonas savastanoi pv. phaseolicola (strain 1448A / Race 6) (Pseudomonas syringae pv. phaseolicola (strain 1448A / Race 6)), this protein is Methylthioribulose-1-phosphate dehydratase.